The chain runs to 133 residues: Large ribosomal subunit protein uL15 (133 aa).

Residues 1 to 60 (MALENLKPAQGSTKDRKRVGRGQGSGMGKTSTRGGKGQTARTGYKAKRGFEGGQQPLQRR) form a disordered region.

This sequence belongs to the universal ribosomal protein uL15 family. Part of the 50S ribosomal subunit.

In terms of biological role, binds to the 23S rRNA. This is Large ribosomal subunit protein uL15 from Wolinella succinogenes (strain ATCC 29543 / DSM 1740 / CCUG 13145 / JCM 31913 / LMG 7466 / NCTC 11488 / FDC 602W) (Vibrio succinogenes).